The primary structure comprises 158 residues: 2-C-methyl-D-erythritol 2,4-cyclodiphosphate synthase (158 aa).

Residues Asp8 and His10 each contribute to the a divalent metal cation site. Residues 8 to 10 and 34 to 35 each bind 4-CDP-2-C-methyl-D-erythritol 2-phosphate; these read DAH and HS. Residue His42 coordinates a divalent metal cation. 4-CDP-2-C-methyl-D-erythritol 2-phosphate is bound by residues 56–58, 132–135, and Arg142; these read DIG and TTTE.

This sequence belongs to the IspF family. As to quaternary structure, homotrimer. Requires a divalent metal cation as cofactor.

The catalysed reaction is 4-CDP-2-C-methyl-D-erythritol 2-phosphate = 2-C-methyl-D-erythritol 2,4-cyclic diphosphate + CMP. It functions in the pathway isoprenoid biosynthesis; isopentenyl diphosphate biosynthesis via DXP pathway; isopentenyl diphosphate from 1-deoxy-D-xylulose 5-phosphate: step 4/6. Its function is as follows. Involved in the biosynthesis of isopentenyl diphosphate (IPP) and dimethylallyl diphosphate (DMAPP), two major building blocks of isoprenoid compounds. Catalyzes the conversion of 4-diphosphocytidyl-2-C-methyl-D-erythritol 2-phosphate (CDP-ME2P) to 2-C-methyl-D-erythritol 2,4-cyclodiphosphate (ME-CPP) with a corresponding release of cytidine 5-monophosphate (CMP). In Nitrosococcus oceani (strain ATCC 19707 / BCRC 17464 / JCM 30415 / NCIMB 11848 / C-107), this protein is 2-C-methyl-D-erythritol 2,4-cyclodiphosphate synthase.